We begin with the raw amino-acid sequence, 147 residues long: Phosphoribosyl-AMP cyclohydrolase 2 (147 aa).

A Mg(2+)-binding site is contributed by Asp-99. Residue Cys-100 coordinates Zn(2+). Mg(2+) contacts are provided by Asp-101 and Asp-103. The Zn(2+) site is built by Cys-116 and Cys-123.

This sequence belongs to the PRA-CH family. In terms of assembly, homodimer. The cofactor is Mg(2+). Requires Zn(2+) as cofactor.

It localises to the cytoplasm. It carries out the reaction 1-(5-phospho-beta-D-ribosyl)-5'-AMP + H2O = 1-(5-phospho-beta-D-ribosyl)-5-[(5-phospho-beta-D-ribosylamino)methylideneamino]imidazole-4-carboxamide. It functions in the pathway amino-acid biosynthesis; L-histidine biosynthesis; L-histidine from 5-phospho-alpha-D-ribose 1-diphosphate: step 3/9. Functionally, catalyzes the hydrolysis of the adenine ring of phosphoribosyl-AMP. This Pseudomonas fluorescens (strain ATCC BAA-477 / NRRL B-23932 / Pf-5) protein is Phosphoribosyl-AMP cyclohydrolase 2.